The sequence spans 369 residues: Deoxyhypusine synthase (369 aa).

NAD(+) contacts are provided by residues 105–109 (SNLIS), 131–133 (TAG), E137, and D238. 136–137 (EE) lines the spermidine pocket. Position 243 (D243) interacts with spermidine. G283 contacts NAD(+). Residue H288 coordinates spermidine. Residue 308–309 (TA) participates in NAD(+) binding. Spermidine contacts are provided by residues 314 to 316 (GSD) and 323 to 329 (EAVSWGK). K329 functions as the Nucleophile in the catalytic mechanism. 342–343 (DA) provides a ligand contact to NAD(+).

The protein belongs to the deoxyhypusine synthase family. The cofactor is NAD(+).

The catalysed reaction is [eIF5A protein]-L-lysine + spermidine = [eIF5A protein]-deoxyhypusine + propane-1,3-diamine. It participates in protein modification; eIF5A hypusination. Functionally, catalyzes the NAD-dependent oxidative cleavage of spermidine and the subsequent transfer of the butylamine moiety of spermidine to the epsilon-amino group of a critical lysine residue of the eIF-5A precursor protein to form the intermediate deoxyhypusine residue. This is the first step of the post-translational modification of that lysine into an unusual amino acid residue named hypusine. Hypusination is unique to mature eIF-5A factor and is essential for its function. This is Deoxyhypusine synthase (Dhps) from Mus musculus (Mouse).